We begin with the raw amino-acid sequence, 311 residues long: Methionyl-tRNA formyltransferase (311 aa).

109–112 (SLLP) provides a ligand contact to (6S)-5,6,7,8-tetrahydrofolate.

The protein belongs to the Fmt family.

It catalyses the reaction L-methionyl-tRNA(fMet) + (6R)-10-formyltetrahydrofolate = N-formyl-L-methionyl-tRNA(fMet) + (6S)-5,6,7,8-tetrahydrofolate + H(+). Functionally, attaches a formyl group to the free amino group of methionyl-tRNA(fMet). The formyl group appears to play a dual role in the initiator identity of N-formylmethionyl-tRNA by promoting its recognition by IF2 and preventing the misappropriation of this tRNA by the elongation apparatus. This chain is Methionyl-tRNA formyltransferase, found in Staphylococcus aureus (strain MW2).